Reading from the N-terminus, the 495-residue chain is Cysteine--tRNA ligase (495 aa).

Cysteine 35 serves as a coordination point for Zn(2+). The 'HIGH' region signature appears at 37–47; sequence PTVYSNVHLGN. Zn(2+)-binding residues include cysteine 230, histidine 255, and glutamate 259. The 'KMSKS' region signature appears at 287–291; the sequence is KMSKS. Residue lysine 290 participates in ATP binding.

This sequence belongs to the class-I aminoacyl-tRNA synthetase family. Monomer. It depends on Zn(2+) as a cofactor.

It localises to the cytoplasm. The catalysed reaction is tRNA(Cys) + L-cysteine + ATP = L-cysteinyl-tRNA(Cys) + AMP + diphosphate. This Flavobacterium psychrophilum (strain ATCC 49511 / DSM 21280 / CIP 103535 / JIP02/86) protein is Cysteine--tRNA ligase.